The chain runs to 436 residues: UBX domain-containing protein 7 (436 aa).

A Glycyl lysine isopeptide (Lys-Gly) (interchain with G-Cter in ubiquitin) cross-link involves residue K19. The segment at A115–N141 is disordered. The region spanning L212–L290 is the UBX domain. The segment covering D325–R346 has biased composition (basic and acidic residues). Disordered stretches follow at residues D325–S357 and S371–K436. Positions S347–S357 are enriched in low complexity. A compositionally biased stretch (polar residues) spans S371–N408. S388 carries the post-translational modification Phosphoserine. Over residues H426–K436 the composition is skewed to basic and acidic residues.

Interacts with CDC48.

The protein resides in the endoplasmic reticulum. In terms of biological role, involved in CDC48-dependent protein degradation through the ubiquitin/proteasome pathway. This is UBX domain-containing protein 7 (UBX7) from Saccharomyces cerevisiae (strain ATCC 204508 / S288c) (Baker's yeast).